Here is a 296-residue protein sequence, read N- to C-terminus: NAD kinase (296 aa).

The active-site Proton acceptor is the Asp72. NAD(+) is bound by residues 72 to 73 (DG), 146 to 147 (ND), Arg157, Lys174, Asp176, 187 to 192 (TAYALS), and Gln247.

The protein belongs to the NAD kinase family. Requires a divalent metal cation as cofactor.

It localises to the cytoplasm. It carries out the reaction NAD(+) + ATP = ADP + NADP(+) + H(+). Involved in the regulation of the intracellular balance of NAD and NADP, and is a key enzyme in the biosynthesis of NADP. Catalyzes specifically the phosphorylation on 2'-hydroxyl of the adenosine moiety of NAD to yield NADP. In Pseudomonas putida (strain GB-1), this protein is NAD kinase.